We begin with the raw amino-acid sequence, 728 residues long: FAS1 domain-containing protein fsc1 (728 aa).

Residues 1–21 form the signal peptide; it reads MNLQFRLYLLFILLFISFANG. Topologically, residues 22-670 are vacuolar; sequence KNEYEDKSTS…TKRQNRWRIT (649 aa). FAS1 domains lie at 29-151 and 154-285; these read STSI…DNII and PPPA…SSLI. N-linked (GlcNAc...) asparagine glycosylation occurs at asparagine 89. Asparagine 404 and asparagine 501 each carry an N-linked (GlcNAc...) asparagine glycan. A helical membrane pass occupies residues 671–691; that stretch reads FISISGLLLSVGICVLCYKIY. At 692–728 the chain is on the cytoplasmic side; sequence FKFFRNRFMNQGEREPLLAPADSDTMAGRRNSSSLSV.

The protein resides in the vacuole membrane. Required for the fusion of autophagosomes with the vacuole. The protein is FAS1 domain-containing protein fsc1 (fsc1) of Schizosaccharomyces pombe (strain 972 / ATCC 24843) (Fission yeast).